Here is a 165-residue protein sequence, read N- to C-terminus: Phosphopantetheine adenylyltransferase (165 aa).

Thr-10 is a binding site for substrate. ATP-binding positions include 10-11 (TF) and His-18. Substrate-binding residues include Lys-42, Leu-75, and Arg-89. Residues 90–92 (GLR), Glu-100, and 125–131 (YTYVASS) contribute to the ATP site.

This sequence belongs to the bacterial CoaD family. As to quaternary structure, homohexamer. Mg(2+) is required as a cofactor.

It localises to the cytoplasm. The enzyme catalyses (R)-4'-phosphopantetheine + ATP + H(+) = 3'-dephospho-CoA + diphosphate. The protein operates within cofactor biosynthesis; coenzyme A biosynthesis; CoA from (R)-pantothenate: step 4/5. Reversibly transfers an adenylyl group from ATP to 4'-phosphopantetheine, yielding dephospho-CoA (dPCoA) and pyrophosphate. This is Phosphopantetheine adenylyltransferase from Chlorobium phaeobacteroides (strain BS1).